The primary structure comprises 366 residues: Phospho-N-acetylmuramoyl-pentapeptide-transferase (366 aa).

Helical transmembrane passes span 25–45 (AGAA…AIIN), 70–90 (GTPT…SLLW), 93–113 (LSNV…AIGF), 134–154 (LGIE…MALA), 174–194 (FVIN…VGAG), 205–225 (GLAI…AYLA), 245–265 (LAVI…FNAP), 268–288 (AIFM…SIAV), 297–317 (VIVG…VFWF), and 343–363 (QVVI…LATL).

It belongs to the glycosyltransferase 4 family. MraY subfamily. Requires Mg(2+) as cofactor.

The protein resides in the cell inner membrane. It carries out the reaction UDP-N-acetyl-alpha-D-muramoyl-L-alanyl-gamma-D-glutamyl-meso-2,6-diaminopimeloyl-D-alanyl-D-alanine + di-trans,octa-cis-undecaprenyl phosphate = di-trans,octa-cis-undecaprenyl diphospho-N-acetyl-alpha-D-muramoyl-L-alanyl-D-glutamyl-meso-2,6-diaminopimeloyl-D-alanyl-D-alanine + UMP. It participates in cell wall biogenesis; peptidoglycan biosynthesis. In terms of biological role, catalyzes the initial step of the lipid cycle reactions in the biosynthesis of the cell wall peptidoglycan: transfers peptidoglycan precursor phospho-MurNAc-pentapeptide from UDP-MurNAc-pentapeptide onto the lipid carrier undecaprenyl phosphate, yielding undecaprenyl-pyrophosphoryl-MurNAc-pentapeptide, known as lipid I. The sequence is that of Phospho-N-acetylmuramoyl-pentapeptide-transferase from Agrobacterium fabrum (strain C58 / ATCC 33970) (Agrobacterium tumefaciens (strain C58)).